A 74-amino-acid chain; its full sequence is Tau-AnmTx Ueq 12-1 (74 aa).

The first 18 residues, 1–18 (MCLLMLVLGAMYVQGWHS), serve as a signal peptide directing secretion. The propeptide at 19–27 (AGFGKRTLK) is removed in mature form. 5 cysteine pairs are disulfide-bonded: Cys30/Cys37, Cys40/Cys71, Cys46/Cys64, Cys51/Cys72, and Cys58/Cys73.

The protein belongs to the Cnidaria small cysteine-rich protein (SCRiP) family. In terms of tissue distribution, detected in mucus secreted from ectoderm.

It is found in the secreted. Potentiates activation of mammalian TRPA1, a non-selective cation channel involved in perception of pain, in vitro yet has an analgesic and anti-inflammatory effect in vivo. Has antibacterial activity against C.glutamicum (MIC=50 uM) and, to a lesser extent, against S.aureus but not against P.aeruginosa or E.coli. The chain is Tau-AnmTx Ueq 12-1 from Urticina eques (Sea anemone).